A 627-amino-acid polypeptide reads, in one-letter code: Pescadillo homolog (627 aa).

A BRCT domain is found at 321-414 (RLRTLFKGLK…QLLPTNKYFI (94 aa)). Disordered stretches follow at residues 450–469 (HVQS…ETVD), 488–562 (YKKF…LQAR), and 595–627 (TIEA…KLGK). Phosphoserine is present on residues Ser453 and Ser457. Composition is skewed to acidic residues over residues 454–469 (DDDS…ETVD) and 497–521 (VNED…EELD). Positions 507–538 (DDDNEDDDEEEEELDEKTKRLQEEKQKMSVQS) form a coiled coil. A compositionally biased stretch (basic and acidic residues) spans 522 to 533 (EKTKRLQEEKQK). A compositionally biased stretch (basic residues) spans 540–549 (KVHKVNKRQV). Basic and acidic residues-rich tracts occupy residues 550-559 (HKAEVDEHRL) and 595-615 (TIEA…RKEA). The stretch at 582-625 (KEKEEWLLRKKRRTIEASEKEARKTAKREARKEAAAAAAKASKL) forms a coiled coil. The segment covering 616–627 (AAAAAKASKLGK) has biased composition (low complexity).

This sequence belongs to the pescadillo family.

The protein resides in the nucleus. It localises to the nucleolus. The protein localises to the nucleoplasm. Its function is as follows. Required for maturation of ribosomal RNAs and formation of the large ribosomal subunit. This chain is Pescadillo homolog, found in Drosophila sechellia (Fruit fly).